The sequence spans 492 residues: Membrane-bound lytic murein transglycosylase F (492 aa).

The signal sequence occupies residues 1–18 (MKGLFLRIIAIVALLLWA). The tract at residues 19 to 268 (IDMVFPWQQI…RIEEKYFNHL (250 aa)) is non-LT domain. Residues 270 to 492 (QFDYVDTRSY…DTLATTVTTQ (223 aa)) are LT domain. Glutamate 313 is a catalytic residue.

The protein in the N-terminal section; belongs to the bacterial solute-binding protein 3 family. It in the C-terminal section; belongs to the transglycosylase Slt family.

Its subcellular location is the cell outer membrane. The enzyme catalyses Exolytic cleavage of the (1-&gt;4)-beta-glycosidic linkage between N-acetylmuramic acid (MurNAc) and N-acetylglucosamine (GlcNAc) residues in peptidoglycan, from either the reducing or the non-reducing ends of the peptidoglycan chains, with concomitant formation of a 1,6-anhydrobond in the MurNAc residue.. Functionally, murein-degrading enzyme that degrades murein glycan strands and insoluble, high-molecular weight murein sacculi, with the concomitant formation of a 1,6-anhydromuramoyl product. Lytic transglycosylases (LTs) play an integral role in the metabolism of the peptidoglycan (PG) sacculus. Their lytic action creates space within the PG sacculus to allow for its expansion as well as for the insertion of various structures such as secretion systems and flagella. This chain is Membrane-bound lytic murein transglycosylase F, found in Pasteurella multocida (strain Pm70).